The sequence spans 146 residues: Catabolic 3-dehydroquinase (146 aa).

Tyr24 serves as the catalytic Proton acceptor. Positions 78, 84, and 91 each coordinate substrate. His104 (proton donor) is an active-site residue. Substrate contacts are provided by residues 105–106 and Arg115; that span reads IT.

It belongs to the type-II 3-dehydroquinase family. In terms of assembly, homododecamer. Adopts a ring-like structure, composed of an arrangement of two hexameric rings stacked on top of one another.

The catalysed reaction is 3-dehydroquinate = 3-dehydroshikimate + H2O. Its pathway is aromatic compound metabolism; 3,4-dihydroxybenzoate biosynthesis; 3,4-dihydroxybenzoate from 3-dehydroquinate: step 1/2. In terms of biological role, is involved in the catabolism of quinate. Allows the utilization of quinate as carbon source via the beta-ketoadipate pathway. This is Catabolic 3-dehydroquinase from Candida tropicalis (strain ATCC MYA-3404 / T1) (Yeast).